Here is a 329-residue protein sequence, read N- to C-terminus: tRNA-modifying protein YgfZ (329 aa).

Folate contacts are provided by tryptophan 32 and tryptophan 190.

This sequence belongs to the tRNA-modifying YgfZ family.

Its subcellular location is the cytoplasm. In terms of biological role, folate-binding protein involved in regulating the level of ATP-DnaA and in the modification of some tRNAs. It is probably a key factor in regulatory networks that act via tRNA modification, such as initiation of chromosomal replication. The polypeptide is tRNA-modifying protein YgfZ (Photobacterium profundum (strain SS9)).